The chain runs to 314 residues: Aryldialkylphosphatase (314 aa).

Residues histidine 22, histidine 24, and lysine 137 each contribute to the Fe cation site. Co(2+) contacts are provided by lysine 137, histidine 170, and histidine 199. Lysine 137 is modified (N6-carboxylysine). Residue aspartate 256 coordinates Fe cation.

It belongs to the metallo-dependent hydrolases superfamily. Phosphotriesterase family. Homodimer. The cofactor is Co(2+). Fe cation serves as cofactor.

The enzyme catalyses An aryl dialkyl phosphate + H2O = dialkyl phosphate + an aryl alcohol.. With respect to regulation, inactivated by EDTA and o-phenanthroline. Has a low paraoxonase activity. Also active, but with a lower activity, against other organo-phosphorus insecticides such as Dursban, Coumaphos, pNP-butanoate or parathion. In Saccharolobus solfataricus (strain ATCC 35092 / DSM 1617 / JCM 11322 / P2) (Sulfolobus solfataricus), this protein is Aryldialkylphosphatase (php).